We begin with the raw amino-acid sequence, 481 residues long: 2-succinylbenzoate--CoA ligase (481 aa).

This sequence belongs to the ATP-dependent AMP-binding enzyme family. MenE subfamily.

It carries out the reaction 2-succinylbenzoate + ATP + CoA = 2-succinylbenzoyl-CoA + AMP + diphosphate. It participates in quinol/quinone metabolism; 1,4-dihydroxy-2-naphthoate biosynthesis; 1,4-dihydroxy-2-naphthoate from chorismate: step 5/7. Its pathway is quinol/quinone metabolism; menaquinone biosynthesis. Converts 2-succinylbenzoate (OSB) to 2-succinylbenzoyl-CoA (OSB-CoA). This is 2-succinylbenzoate--CoA ligase from Bacillus mycoides (strain KBAB4) (Bacillus weihenstephanensis).